A 212-amino-acid polypeptide reads, in one-letter code: ATP synthase F(0) complex subunit a (212 aa).

The next 6 membrane-spanning stretches (helical) occupy residues 3–23 (MMGIPLILIAIFLPTLLIYTS), 58–78 (WAAMLMTLMIXLLSMNLLGLL), 87–107 (QLSMNMALAIPLWLATVLTGL), 128–148 (IPLLIIIETVSLFIRPLALGV), 169–189 (FVLLPMMTLTALSTFIVLVLL), and 192–212 (LEIAVAMIQAYVFTLLLTLYL).

This sequence belongs to the ATPase A chain family. In terms of assembly, component of the ATP synthase complex composed at least of ATP5F1A/subunit alpha, ATP5F1B/subunit beta, ATP5MC1/subunit c (homooctomer), MT-ATP6/subunit a, MT-ATP8/subunit 8, ATP5ME/subunit e, ATP5MF/subunit f, ATP5MG/subunit g, ATP5MK/subunit k, ATP5MJ/subunit j, ATP5F1C/subunit gamma, ATP5F1D/subunit delta, ATP5F1E/subunit epsilon, ATP5PF/subunit F6, ATP5PB/subunit b, ATP5PD/subunit d, ATP5PO/subunit OSCP. ATP synthase complex consists of a soluble F(1) head domain (subunits alpha(3) and beta(3)) - the catalytic core - and a membrane F(0) domain - the membrane proton channel (subunits c, a, 8, e, f, g, k and j). These two domains are linked by a central stalk (subunits gamma, delta, and epsilon) rotating inside the F1 region and a stationary peripheral stalk (subunits F6, b, d, and OSCP). Interacts with DNAJC30; interaction is direct.

The protein resides in the mitochondrion inner membrane. It catalyses the reaction H(+)(in) = H(+)(out). Functionally, subunit a, of the mitochondrial membrane ATP synthase complex (F(1)F(0) ATP synthase or Complex V) that produces ATP from ADP in the presence of a proton gradient across the membrane which is generated by electron transport complexes of the respiratory chain. ATP synthase complex consist of a soluble F(1) head domain - the catalytic core - and a membrane F(1) domain - the membrane proton channel. These two domains are linked by a central stalk rotating inside the F(1) region and a stationary peripheral stalk. During catalysis, ATP synthesis in the catalytic domain of F(1) is coupled via a rotary mechanism of the central stalk subunits to proton translocation. With the subunit c (ATP5MC1), forms the proton-conducting channel in the F(0) domain, that contains two crucial half-channels (inlet and outlet) that facilitate proton movement from the mitochondrial intermembrane space (IMS) into the matrix. Protons are taken up via the inlet half-channel and released through the outlet half-channel, following a Grotthuss mechanism. This Tropidurus hispidus (Peters' lava lizard) protein is ATP synthase F(0) complex subunit a.